Consider the following 309-residue polypeptide: Large ribosomal subunit protein uL22m (309 aa).

The transit peptide at 1 to 25 (MNFHTARISQVGVISRALLSSVSRR) directs the protein to the mitochondrion. The segment at 40–63 (SLFGSITENKPKEGKNRGDEDAGS) is disordered. The span at 48-59 (NKPKEGKNRGDE) shows a compositional bias: basic and acidic residues.

It belongs to the universal ribosomal protein uL22 family. Component of the mitochondrial large ribosomal subunit (mt-LSU). Mature yeast 74S mitochondrial ribosomes consist of a small (37S) and a large (54S) subunit. The 37S small subunit contains a 15S ribosomal RNA (15S mt-rRNA) and 34 different proteins. The 54S large subunit contains a 21S rRNA (21S mt-rRNA) and 46 different proteins. uL22m forms the wall of the exit tunnel.

The protein localises to the mitochondrion. Its function is as follows. Component of the mitochondrial ribosome (mitoribosome), a dedicated translation machinery responsible for the synthesis of mitochondrial genome-encoded proteins, including at least some of the essential transmembrane subunits of the mitochondrial respiratory chain. The mitoribosomes are attached to the mitochondrial inner membrane and translation products are cotranslationally integrated into the membrane. This chain is Large ribosomal subunit protein uL22m (MRPL22), found in Saccharomyces cerevisiae (strain ATCC 204508 / S288c) (Baker's yeast).